The primary structure comprises 374 residues: Peptide chain release factor 2 (374 aa).

Q252 bears the N5-methylglutamine mark.

This sequence belongs to the prokaryotic/mitochondrial release factor family. In terms of processing, methylated by PrmC. Methylation increases the termination efficiency of RF2.

The protein localises to the cytoplasm. Its function is as follows. Peptide chain release factor 2 directs the termination of translation in response to the peptide chain termination codons UGA and UAA. This is Peptide chain release factor 2 from Stenotrophomonas maltophilia (strain R551-3).